Here is a 458-residue protein sequence, read N- to C-terminus: Dihydrolipoyl dehydrogenase (458 aa).

FAD-binding positions include 30 to 38 (DKGKLGGTC), K47, and A112. An intrachain disulfide couples C38 to C43. Residues 177 to 181 (GGGVI), E200, and 263 to 266 (AIGR) contribute to the NAD(+) site. Positions 305 and 313 each coordinate FAD. The active-site Proton acceptor is H437.

The protein belongs to the class-I pyridine nucleotide-disulfide oxidoreductase family. Homodimer. It depends on FAD as a cofactor.

Its subcellular location is the cytoplasm. The enzyme catalyses N(6)-[(R)-dihydrolipoyl]-L-lysyl-[protein] + NAD(+) = N(6)-[(R)-lipoyl]-L-lysyl-[protein] + NADH + H(+). Its pathway is ketone degradation; acetoin degradation. The polypeptide is Dihydrolipoyl dehydrogenase (acoL) (Bacillus subtilis (strain 168)).